A 425-amino-acid chain; its full sequence is UPF0761 membrane protein XC_3370 (425 aa).

6 consecutive transmembrane segments (helical) span residues 48-68 (VFALVPLAIVVFGVLSAFPAF), 105-125 (FTVAGMVALVASLLITLHSIE), 154-174 (GTMLAAASMAMAAYVFALPLF), 182-202 (LAEFAWRLAPMAVEFVCIVLI), 216-236 (ALPGALLAVILMEIVKWGFGF), and 250-270 (ALSALPILLLWIYLSWVSVLL).

It belongs to the UPF0761 family.

It is found in the cell inner membrane. This is UPF0761 membrane protein XC_3370 from Xanthomonas campestris pv. campestris (strain 8004).